The sequence spans 498 residues: Galactose-1-phosphate uridylyltransferase (498 aa).

It belongs to the galactose-1-phosphate uridylyltransferase type 2 family.

The protein resides in the cytoplasm. It catalyses the reaction alpha-D-galactose 1-phosphate + UDP-alpha-D-glucose = alpha-D-glucose 1-phosphate + UDP-alpha-D-galactose. It participates in carbohydrate metabolism; galactose metabolism. In Latilactobacillus sakei subsp. sakei (strain 23K) (Lactobacillus sakei subsp. sakei), this protein is Galactose-1-phosphate uridylyltransferase.